We begin with the raw amino-acid sequence, 316 residues long: Aspartate carbamoyltransferase catalytic subunit (316 aa).

Carbamoyl phosphate contacts are provided by Arg-58 and Thr-59. Residue Lys-86 coordinates L-aspartate. Arg-108, His-136, and Gln-139 together coordinate carbamoyl phosphate. L-aspartate-binding residues include Arg-169 and Arg-223. Gly-264 and Pro-265 together coordinate carbamoyl phosphate.

The protein belongs to the aspartate/ornithine carbamoyltransferase superfamily. ATCase family. In terms of assembly, heterododecamer (2C3:3R2) of six catalytic PyrB chains organized as two trimers (C3), and six regulatory PyrI chains organized as three dimers (R2).

The enzyme catalyses carbamoyl phosphate + L-aspartate = N-carbamoyl-L-aspartate + phosphate + H(+). It functions in the pathway pyrimidine metabolism; UMP biosynthesis via de novo pathway; (S)-dihydroorotate from bicarbonate: step 2/3. In terms of biological role, catalyzes the condensation of carbamoyl phosphate and aspartate to form carbamoyl aspartate and inorganic phosphate, the committed step in the de novo pyrimidine nucleotide biosynthesis pathway. The protein is Aspartate carbamoyltransferase catalytic subunit of Granulibacter bethesdensis (strain ATCC BAA-1260 / CGDNIH1).